The following is a 380-amino-acid chain: tRNA-specific 2-thiouridylase MnmA (380 aa).

ATP is bound by residues 14-21 (GLSGGVDS) and M40. The interval 100–102 (NPD) is interaction with target base in tRNA. C105 acts as the Nucleophile in catalysis. Residues C105 and C203 are joined by a disulfide bond. Residue G129 participates in ATP binding. The segment at 153–155 (KDQ) is interaction with tRNA. The active-site Cysteine persulfide intermediate is C203. Residues 322–323 (RY) form an interaction with tRNA region.

It belongs to the MnmA/TRMU family.

Its subcellular location is the cytoplasm. It catalyses the reaction S-sulfanyl-L-cysteinyl-[protein] + uridine(34) in tRNA + AH2 + ATP = 2-thiouridine(34) in tRNA + L-cysteinyl-[protein] + A + AMP + diphosphate + H(+). Functionally, catalyzes the 2-thiolation of uridine at the wobble position (U34) of tRNA, leading to the formation of s(2)U34. In Leptothrix cholodnii (strain ATCC 51168 / LMG 8142 / SP-6) (Leptothrix discophora (strain SP-6)), this protein is tRNA-specific 2-thiouridylase MnmA.